We begin with the raw amino-acid sequence, 326 residues long: Transformer-2 protein homolog (326 aa).

2 disordered regions span residues 1–114 (MEVA…PSNV) and 179–326 (LHGK…SYRR). The segment covering 38-55 (RDSRERSPPRGNSRERSP) has biased composition (basic and acidic residues). The span at 56-85 (PRGGSPNRGGSPNRGGSPNRGGSPNRGGSP) shows a compositional bias: low complexity. Residues 104–113 (RLANTASPSN) show a composition bias toward polar residues. One can recognise an RRM domain in the interval 113–191 (NVLGVFGLAP…KSIRTDFSAT (79 aa)). Over residues 220–239 (YGGGDRYGRGDYGGRGGGGD) the composition is skewed to gly residues. The span at 240-326 (RYGRDDRGGD…DERPRDSYRR (87 aa)) shows a compositional bias: basic and acidic residues.

The protein belongs to the splicing factor SR family.

It is found in the nucleus. Its function is as follows. Sequence-specific RNA-binding protein which participates in the control of pre-mRNA splicing. The protein is Transformer-2 protein homolog (tra2) of Dictyostelium discoideum (Social amoeba).